The sequence spans 351 residues: Nicotinate-nucleotide--dimethylbenzimidazole phosphoribosyltransferase (351 aa).

Glu318 serves as the catalytic Proton acceptor.

The protein belongs to the CobT family.

It catalyses the reaction 5,6-dimethylbenzimidazole + nicotinate beta-D-ribonucleotide = alpha-ribazole 5'-phosphate + nicotinate + H(+). The protein operates within nucleoside biosynthesis; alpha-ribazole biosynthesis; alpha-ribazole from 5,6-dimethylbenzimidazole: step 1/2. Catalyzes the synthesis of alpha-ribazole-5'-phosphate from nicotinate mononucleotide (NAMN) and 5,6-dimethylbenzimidazole (DMB). The polypeptide is Nicotinate-nucleotide--dimethylbenzimidazole phosphoribosyltransferase (Chloroflexus aurantiacus (strain ATCC 29366 / DSM 635 / J-10-fl)).